A 654-amino-acid polypeptide reads, in one-letter code: Smc-like protein Sph3 (654 aa).

Coiled coils occupy residues 135–290 (TDAI…LQTV) and 341–503 (IRGT…LTAA).

This sequence belongs to the Sph1/Sph2 family.

Functionally, involved in cell-shape determination. Required for the formation of rods and wild-type-like motility. The polypeptide is Smc-like protein Sph3 (Haloferax volcanii (strain ATCC 29605 / DSM 3757 / JCM 8879 / NBRC 14742 / NCIMB 2012 / VKM B-1768 / DS2) (Halobacterium volcanii)).